A 307-amino-acid polypeptide reads, in one-letter code: tRNA pseudouridine synthase B (307 aa).

Residue D45 is the Nucleophile of the active site.

This sequence belongs to the pseudouridine synthase TruB family. Type 1 subfamily.

It catalyses the reaction uridine(55) in tRNA = pseudouridine(55) in tRNA. Functionally, responsible for synthesis of pseudouridine from uracil-55 in the psi GC loop of transfer RNAs. In Heliobacterium mobile (Heliobacillus mobilis), this protein is tRNA pseudouridine synthase B.